The chain runs to 97 residues: DNA-directed RNA polymerase subunit omega (97 aa).

Positions 1-16 are enriched in polar residues; it reads MSTPNALAAFNSSPSL. Residues 1-21 form a disordered region; it reads MSTPNALAAFNSSPSLNAPEG.

Belongs to the RNA polymerase subunit omega family. In terms of assembly, the RNAP catalytic core consists of 2 alpha, 1 beta, 1 beta' and 1 omega subunit. When a sigma factor is associated with the core the holoenzyme is formed, which can initiate transcription.

It carries out the reaction RNA(n) + a ribonucleoside 5'-triphosphate = RNA(n+1) + diphosphate. In terms of biological role, promotes RNA polymerase assembly. Latches the N- and C-terminal regions of the beta' subunit thereby facilitating its interaction with the beta and alpha subunits. The sequence is that of DNA-directed RNA polymerase subunit omega from Saccharopolyspora erythraea (strain ATCC 11635 / DSM 40517 / JCM 4748 / NBRC 13426 / NCIMB 8594 / NRRL 2338).